The following is a 518-amino-acid chain: Lysine--tRNA ligase (518 aa).

The tract at residues 1-28 (MTEPTQPNAAQPDAARPNVAPEMDDNKI) is disordered. Positions 428 and 435 each coordinate Mg(2+).

The protein belongs to the class-II aminoacyl-tRNA synthetase family. As to quaternary structure, homodimer. It depends on Mg(2+) as a cofactor.

Its subcellular location is the cytoplasm. The catalysed reaction is tRNA(Lys) + L-lysine + ATP = L-lysyl-tRNA(Lys) + AMP + diphosphate. This is Lysine--tRNA ligase from Paraburkholderia phytofirmans (strain DSM 17436 / LMG 22146 / PsJN) (Burkholderia phytofirmans).